The following is a 161-amino-acid chain: 6,7-dimethyl-8-ribityllumazine synthase (161 aa).

Residues tryptophan 31, 65 to 67 (TFE), and 89 to 91 (CVV) contribute to the 5-amino-6-(D-ribitylamino)uracil site. 94 to 95 (DT) lines the (2S)-2-hydroxy-3-oxobutyl phosphate pocket. The Proton donor role is filled by histidine 97. Phenylalanine 122 contacts 5-amino-6-(D-ribitylamino)uracil. Arginine 136 serves as a coordination point for (2S)-2-hydroxy-3-oxobutyl phosphate.

Belongs to the DMRL synthase family.

It carries out the reaction (2S)-2-hydroxy-3-oxobutyl phosphate + 5-amino-6-(D-ribitylamino)uracil = 6,7-dimethyl-8-(1-D-ribityl)lumazine + phosphate + 2 H2O + H(+). Its pathway is cofactor biosynthesis; riboflavin biosynthesis; riboflavin from 2-hydroxy-3-oxobutyl phosphate and 5-amino-6-(D-ribitylamino)uracil: step 1/2. Catalyzes the formation of 6,7-dimethyl-8-ribityllumazine by condensation of 5-amino-6-(D-ribitylamino)uracil with 3,4-dihydroxy-2-butanone 4-phosphate. This is the penultimate step in the biosynthesis of riboflavin. The chain is 6,7-dimethyl-8-ribityllumazine synthase from Porphyromonas gingivalis (strain ATCC 33277 / DSM 20709 / CIP 103683 / JCM 12257 / NCTC 11834 / 2561).